The primary structure comprises 335 residues: Glucokinase (335 aa).

11 to 16 (ADIGGT) serves as a coordination point for ATP.

Belongs to the bacterial glucokinase family.

Its subcellular location is the cytoplasm. It catalyses the reaction D-glucose + ATP = D-glucose 6-phosphate + ADP + H(+). The polypeptide is Glucokinase (Xanthomonas oryzae pv. oryzae (strain MAFF 311018)).